The chain runs to 473 residues: Ribonuclease Y (473 aa).

A helical transmembrane segment spans residues 4–24; it reads LIAFIILLILFVLLITIVPVV. The region spanning 158–218 is the KH domain; the sequence is SLFNIDIIDE…IRREIARIVM (61 aa). Positions 285–378 constitute an HD domain; it reads ILSHSLEVAE…VKIVDTLSAA (94 aa).

Belongs to the RNase Y family.

The protein localises to the cell membrane. Functionally, endoribonuclease that initiates mRNA decay. This Ureaplasma parvum serovar 3 (strain ATCC 27815 / 27 / NCTC 11736) protein is Ribonuclease Y.